The chain runs to 521 residues: Aldehyde dehydrogenase, mitochondrial (521 aa).

The transit peptide at 1-21 (MLRPAALAAARLVLRQGRRLL) directs the protein to the mitochondrion. The SIFI-degron motif lies at 13-28 (VLRQGRRLLSAAPTQA). Residues Lys-56, Lys-77, and Lys-163 each carry the N6-acetyllysine modification. Residue 266–271 (GSTEVG) participates in NAD(+) binding. Glu-289 serves as the catalytic Proton acceptor. Cys-323 (nucleophile) is an active-site residue. 7 positions are modified to N6-acetyllysine: Lys-372, Lys-379, Lys-387, Lys-430, Lys-432, Lys-445, and Lys-455.

Belongs to the aldehyde dehydrogenase family. As to quaternary structure, homotetramer. In response to mitochondrial stress, the precursor protein is ubiquitinated by the SIFI complex in the cytoplasm before mitochondrial import, leading to its degradation. Within the SIFI complex, UBR4 initiates ubiquitin chain that are further elongated or branched by KCMF1.

Its subcellular location is the mitochondrion matrix. It catalyses the reaction an aldehyde + NAD(+) + H2O = a carboxylate + NADH + 2 H(+). It participates in alcohol metabolism; ethanol degradation; acetate from ethanol: step 2/2. Its function is as follows. Required for clearance of cellular formaldehyde, a cytotoxic and carcinogenic metabolite that induces DNA damage. This Sus scrofa (Pig) protein is Aldehyde dehydrogenase, mitochondrial (ALDH2).